Reading from the N-terminus, the 349-residue chain is Magnesium-protoporphyrin IX monomethyl ester [oxidative] cyclase (349 aa).

This sequence belongs to the AcsF family. The cofactor is Fe cation.

It localises to the plastid. The protein localises to the chloroplast. It catalyses the reaction Mg-protoporphyrin IX 13-monomethyl ester + 3 NADPH + 3 O2 + 2 H(+) = 3,8-divinyl protochlorophyllide a + 3 NADP(+) + 5 H2O. It participates in porphyrin-containing compound metabolism; chlorophyll biosynthesis (light-independent). Functionally, catalyzes the formation of the isocyclic ring in chlorophyll biosynthesis. Mediates the cyclase reaction, which results in the formation of divinylprotochlorophyllide (Pchlide) characteristic of all chlorophylls from magnesium-protoporphyrin IX 13-monomethyl ester (MgPMME). The sequence is that of Magnesium-protoporphyrin IX monomethyl ester [oxidative] cyclase from Porphyra purpurea (Red seaweed).